The chain runs to 259 residues: UPF0246 protein NMB0895 (259 aa).

This sequence belongs to the UPF0246 family.

This chain is UPF0246 protein NMB0895, found in Neisseria meningitidis serogroup B (strain ATCC BAA-335 / MC58).